The chain runs to 250 residues: Small ribosomal subunit protein uS2 (250 aa).

Belongs to the universal ribosomal protein uS2 family.

This is Small ribosomal subunit protein uS2 from Polaromonas naphthalenivorans (strain CJ2).